The chain runs to 663 residues: Methionine--tRNA ligase (663 aa).

Residues 10 to 20 (AYTNGPLHLGH) carry the 'HIGH' region motif. Zn(2+) contacts are provided by Cys-142, Cys-145, Cys-154, and Cys-157. The 'KMSKS' region signature appears at 323–327 (KMSTS). Residue Thr-326 participates in ATP binding. Residues 563–663 (YFTKVDLRVG…REISLGSKIH (101 aa)) form the tRNA-binding domain.

Belongs to the class-I aminoacyl-tRNA synthetase family. MetG type 1 subfamily. As to quaternary structure, homodimer. The cofactor is Zn(2+).

Its subcellular location is the cytoplasm. It carries out the reaction tRNA(Met) + L-methionine + ATP = L-methionyl-tRNA(Met) + AMP + diphosphate. In terms of biological role, is required not only for elongation of protein synthesis but also for the initiation of all mRNA translation through initiator tRNA(fMet) aminoacylation. The polypeptide is Methionine--tRNA ligase (Methanococcus vannielii (strain ATCC 35089 / DSM 1224 / JCM 13029 / OCM 148 / SB)).